The sequence spans 356 residues: MQTNSSNSVPSAISDKYTQNHMPIAIWLLICCALVFAMIVVGGVTRLTGSGLSIVEWKPIVGTIPPIGQEDWEVLLEKYRQIPQYEQVNKGMTLDEFKGIFWWEYFHRLLGRLIGLVYFIPFVYFMVRKRIDRLLGLKLLGIFALGALQGLMGWYMVMSGLADNVYVSQYRLTAHLGLAFVIYAAMFWVATGLISPLNTHLSDPVSVHKLKKFAWMLTGLIFVMVLSGGLVAGIHAGRAYNTFPLMDGFLIPPAMFVLEPWYRNFFDNITTVQFDHRLIAWLLIFSIPWFWFKAKQLSLSYSGRLACHLLLLMLLIQAGLGITTLLLSVPLTFATAHQAGAVLLFTAALWVCRKLS.

The next 5 helical transmembrane spans lie at 24 to 44 (IAIW…VGGV), 106 to 126 (FHRL…VYFM), 139 to 159 (LLGI…MVMS), 174 to 194 (AHLG…TGLI), and 214 to 234 (AWML…VAGI). His276 contacts heme. Transmembrane regions (helical) follow at residues 278–298 (LIAW…KQLS), 309–329 (LLLL…LLSV), and 331–351 (LTFA…ALWV). Residue His337 participates in heme binding.

This sequence belongs to the COX15/CtaA family. Type 2 subfamily. As to quaternary structure, interacts with CtaB. The cofactor is heme b.

It localises to the cell membrane. The catalysed reaction is Fe(II)-heme o + 2 A + H2O = Fe(II)-heme a + 2 AH2. Its pathway is porphyrin-containing compound metabolism; heme A biosynthesis; heme A from heme O: step 1/1. Its function is as follows. Catalyzes the conversion of heme O to heme A by two successive hydroxylations of the methyl group at C8. The first hydroxylation forms heme I, the second hydroxylation results in an unstable dihydroxymethyl group, which spontaneously dehydrates, resulting in the formyl group of heme A. The protein is Heme A synthase of Nitrosomonas eutropha (strain DSM 101675 / C91 / Nm57).